We begin with the raw amino-acid sequence, 259 residues long: BTB/POZ domain-containing protein KCTD4 (259 aa).

Residues T33–Q134 form the BTB domain.

The chain is BTB/POZ domain-containing protein KCTD4 (Kctd4) from Mus musculus (Mouse).